The sequence spans 442 residues: Trigger factor (442 aa).

A PPIase FKBP-type domain is found at 162–247 (GDQVTIDAIG…IKAVHTSEPT (86 aa)).

This sequence belongs to the FKBP-type PPIase family. Tig subfamily.

It localises to the cytoplasm. It carries out the reaction [protein]-peptidylproline (omega=180) = [protein]-peptidylproline (omega=0). Its function is as follows. Involved in protein export. Acts as a chaperone by maintaining the newly synthesized protein in an open conformation. Functions as a peptidyl-prolyl cis-trans isomerase. This Rickettsia canadensis (strain McKiel) protein is Trigger factor.